The following is a 106-amino-acid chain: UPF0145 protein AZOSEA16190 (106 aa).

It belongs to the UPF0145 family.

The chain is UPF0145 protein AZOSEA16190 from Aromatoleum aromaticum (strain DSM 19018 / LMG 30748 / EbN1) (Azoarcus sp. (strain EbN1)).